The primary structure comprises 138 residues: uncharacterized protein (138 aa).

This is an uncharacterized protein from Acanthamoeba polyphaga (Amoeba).